Here is a 334-residue protein sequence, read N- to C-terminus: Kihadalactone A synthase LFS (334 aa).

One can recognise a Fe2OG dioxygenase domain in the interval 181-286; that stretch reads KTASYSNMFH…RYSTGLFLCP (106 aa). Fe cation-binding residues include His-208, Asp-210, and His-269. Residue Arg-277 participates in 2-oxoglutarate binding.

The protein belongs to the iron/ascorbate-dependent oxidoreductase family. The cofactor is Fe(2+). Expressed in maturing fruits and in juice vesicles.

It catalyses the reaction (1R,2R,3S,8R,10R,11R,15S,16S)-3-(acetyloxy)-15-(1-hydroxy-4-oxobutan-2-yl)-2,7,7,11,16-pentamethyl-5-oxo-6-oxatetracyclo[9.7.0.0(2,8).0(12,16)]octadec-12-en-10-yl acetate + 2-oxoglutarate + O2 = kihadalactone A + succinate + CO2 + 2 H2O. The protein operates within secondary metabolite biosynthesis; terpenoid biosynthesis. Its function is as follows. 2-oxoglutarate-Fe(II) type oxidoreductase involved in the biosynthesis of limonoids triterpene natural products such as limonin, a compound with insecticidal activity responsible for the bitter taste in citrus. Catalyzes the formation of kihadalactone A. This Citrus sinensis (Sweet orange) protein is Kihadalactone A synthase LFS.